Consider the following 492-residue polypeptide: Cytochrome P450 2A1 (492 aa).

Phosphoserine is present on serine 130. Residue cysteine 437 coordinates heme.

This sequence belongs to the cytochrome P450 family. Requires heme as cofactor. As to expression, liver and testis.

It is found in the endoplasmic reticulum membrane. It localises to the microsome membrane. It catalyses the reaction an organic molecule + reduced [NADPH--hemoprotein reductase] + O2 = an alcohol + oxidized [NADPH--hemoprotein reductase] + H2O + H(+). Highly active in the 7-alpha-hydroxylation of testosterone, progesterone and androstenedione. This chain is Cytochrome P450 2A1 (Cyp2a1), found in Rattus norvegicus (Rat).